A 579-amino-acid chain; its full sequence is General transcriptional corepressor tupA (579 aa).

A compositionally biased stretch (polar residues) spans 83-101 (NINASQRDLNSPSTFRSNS). A disordered region spans residues 83 to 258 (NINASQRDLN…ENGKEKGTDW (176 aa)). Low complexity-rich tracts occupy residues 109-128 (NNNN…NNNN), 157-198 (QQPG…LSPL), and 207-224 (MGNN…NNNN). Basic and acidic residues predominate over residues 227–256 (KKPDMEEVKEEDRRRHDTEMSEENGKEKGT). 7 WD repeats span residues 279 to 319 (QHNS…HAFV), 325 to 364 (DGDL…IQHT), 367 to 406 (GHEL…CAFT), 413 to 452 (GPKN…FLER), 455 to 494 (GHLD…SRSR), 501 to 540 (GHKD…THMM), and 543 to 579 (GHKN…KYDS).

This sequence belongs to the WD repeat TUP1 family. As to quaternary structure, associates with trfA to form the trfA-tupA corepressor complex.

Its subcellular location is the nucleus. Its function is as follows. Acts as a component of the trfA-tupA corepressor complex which is involved in the repression of many genes in a wide variety of physiological processes. May also be involved in the derepression of at least some target genes. The complex is recruited to target genes by interaction with DNA-bound transcriptional repressors. The complex recruits histone deacetylases to produce a repressive chromatin structure, interacts with hypoacetylated N-terminal tails of histones H3 and H4 that have been programmed for repression by the action of histone deacetylases and interferes directly with the transcriptional machinery by associating with the RNA polymerase II mediator complex. In Dictyostelium discoideum (Social amoeba), this protein is General transcriptional corepressor tupA (tupA).